Here is a 622-residue protein sequence, read N- to C-terminus: Kinesin light chain 2 (622 aa).

Positions 78–143 (ILALSSHLGA…KQHLLFMSQI (66 aa)) form a coiled coil. Residues 145–164 (KLDEDASPNEEKGDVPKDTL) show a composition bias toward basic and acidic residues. The interval 145–191 (KLDEDASPNEEKGDVPKDTLDDLFPNEDEQSPAPSPGGGDVSGQHGG) is disordered. 3 positions are modified to phosphoserine: serine 151, serine 175, and serine 179. Gly residues predominate over residues 180-190 (PGGGDVSGQHG). TPR repeat units follow at residues 198–231 (LRTLHNLVIQYASQGRYEVAVPLCKQALEDLEKT), 240–273 (ATMLNILALVYRDQNKYKEAAHLLNDALAIREKT), 282–315 (AATLNNLAVLYGKRGKYKEAEPLCKRALEIREKV), 324–357 (AKQLSNLALLCQNQGKAEEVEYYYRRALEIYATR), and 366–399 (AKTKNNLASCYLKQGKYQDAETLYKEILTRAHEK). Serine 445 is subject to Phosphoserine. The stretch at 449-482 (NTTLRSLGALYRRQGKLEAAHTLEDCASRNRKQG) is one TPR 6 repeat. 2 disordered regions span residues 476–548 (SRNR…SFGK) and 563–622 (KLQG…SLVG). Residues 493 to 509 (ELLKDGSGRRGDRRSSR) are compositionally biased toward basic and acidic residues. 2 positions are modified to phosphoserine: serine 508 and serine 521. Residues 538–547 (GSLRRSGSFG) are compositionally biased toward low complexity. A phosphoserine mark is found at serine 581, serine 582, serine 589, serine 608, serine 610, and serine 615. The span at 601 to 622 (LSDSRTLSSSSMDLSRRSSLVG) shows a compositional bias: low complexity.

It belongs to the kinesin light chain family. As to quaternary structure, oligomeric complex composed of two heavy chains and two light chains. Interacts (via TPR repeats) with PLEKHM2.

It localises to the cytoplasm. It is found in the cytoskeleton. Its subcellular location is the lysosome membrane. Functionally, kinesin is a microtubule-associated force-producing protein that plays a role in organelle transport. The light chain functions in coupling of cargo to the heavy chain or in the modulation of its ATPase activity. Through binding with PLEKHM2 and ARL8B, recruits kinesin-1 to lysosomes and hence direct lysosomes movement toward microtubule plus ends. This chain is Kinesin light chain 2, found in Homo sapiens (Human).